Consider the following 181-residue polypeptide: Avenin-like a6 (181 aa).

Residues 1 to 19 form the signal peptide; that stretch reads MKNLFILALLAFTATSAVA.

Belongs to the prolamin family. Contains 7 disulfide bonds.

Functionally, seed storage protein. Not integrated in the gluten polymer through disulfide bonds, unless incorporated by reduction and reoxidation during dough making. Increases dough strength and bread volume, but decreases dough stability when added into a base wheat flour. In Triticum aestivum (Wheat), this protein is Avenin-like a6.